A 192-amino-acid polypeptide reads, in one-letter code: Adenylate kinase (192 aa).

10 to 18 (GVPGVGKTT) provides a ligand contact to ATP.

This sequence belongs to the archaeal adenylate kinase family.

It localises to the cytoplasm. The catalysed reaction is AMP + ATP = 2 ADP. The protein is Adenylate kinase of Methanoculleus marisnigri (strain ATCC 35101 / DSM 1498 / JR1).